The primary structure comprises 178 residues: ATP-dependent protease subunit HslV (178 aa).

Thr-2 is an active-site residue. The Na(+) site is built by Gly-157, Cys-160, and Thr-163.

The protein belongs to the peptidase T1B family. HslV subfamily. A double ring-shaped homohexamer of HslV is capped on each side by a ring-shaped HslU homohexamer. The assembly of the HslU/HslV complex is dependent on binding of ATP.

The protein resides in the cytoplasm. The catalysed reaction is ATP-dependent cleavage of peptide bonds with broad specificity.. With respect to regulation, allosterically activated by HslU binding. Protease subunit of a proteasome-like degradation complex believed to be a general protein degrading machinery. In Hamiltonella defensa subsp. Acyrthosiphon pisum (strain 5AT), this protein is ATP-dependent protease subunit HslV.